Reading from the N-terminus, the 104-residue chain is MSIMDYFRRSQPKSATVAKERLQIIVARERARPTGEPDYLPRLKQELLQVISKYERIDLDQVSVNVERSGDCDVLELNVVLSESERAAVRAAASRAGAAAVRNC.

Belongs to the MinE family.

Prevents the cell division inhibition by proteins MinC and MinD at internal division sites while permitting inhibition at polar sites. This ensures cell division at the proper site by restricting the formation of a division septum at the midpoint of the long axis of the cell. This chain is Cell division topological specificity factor, found in Sorangium cellulosum (strain So ce56) (Polyangium cellulosum (strain So ce56)).